Consider the following 342-residue polypeptide: MKFLDEAKVYIRSGDGGAGCVSFRREKFIEFGGPDGGDGGRGGDVWAECVEGLNTLIDYRYQQHFKAKKGEHGSGRNRAGAKGADVVLKVPAGTEILAEDRETQIADLTQVGQRVLLARGGNGGFGNAYFTTSTNRAPRHANPGQEGREHWLWLRLKLIADAGLVGLPNAGKSTFLATVTAAKPKIADYPFTTLHPGLGVVRVDAREFVLADIPGLIEGAHEGVGLGDRFLAHVERCRVLLHLVDGTSEDAGAAYQLVRTELDAYGHGLAEKPEIVALSKADILDPETLAAQVARLEEAAGRPPLVLSAATRQGVPEALRALMAAMDAASAEEAKPAEAWQP.

Residues 1–159 (MKFLDEAKVY…HWLWLRLKLI (159 aa)) form the Obg domain. In terms of domain architecture, OBG-type G spans 160-327 (ADAGLVGLPN…ALRALMAAMD (168 aa)). GTP is bound by residues 166-173 (GLPNAGKS), 191-195 (FTTLH), 212-215 (DIPG), 279-282 (SKAD), and 308-310 (SAA). Mg(2+) is bound by residues S173 and T193.

This sequence belongs to the TRAFAC class OBG-HflX-like GTPase superfamily. OBG GTPase family. As to quaternary structure, monomer. Mg(2+) serves as cofactor.

The protein localises to the cytoplasm. Functionally, an essential GTPase which binds GTP, GDP and possibly (p)ppGpp with moderate affinity, with high nucleotide exchange rates and a fairly low GTP hydrolysis rate. Plays a role in control of the cell cycle, stress response, ribosome biogenesis and in those bacteria that undergo differentiation, in morphogenesis control. In Methylobacterium nodulans (strain LMG 21967 / CNCM I-2342 / ORS 2060), this protein is GTPase Obg.